The chain runs to 141 residues: MAANLLFSEDQIKEYKTKFDAFDRNNDGNFPTMFLGNAMKSVGHVLTAAELENSRRVRKGTTTFPQFLAMILDKKCRKVFKAMDKDDKDKLLSADEVRQAMLSFDRQITEDKIKEMIEKADFPNDGKCSLEEFVKMVMNFC.

4 EF-hand domains span residues 10 to 42 (DQIK…MKSV), 43 to 72 (GHVL…AMIL), 73 to 107 (DKKC…FDRQ), and 108 to 141 (ITED…MNFC). Positions 23, 25, 27, and 29 each coordinate Ca(2+). Positions 84, 86, 90, 95, 121, 125, 127, and 132 each coordinate Ca(2+).

Found in cell lineages giving rise to the aboral ectoderm, a squamous epithelium covering the surface of the late stage embryo and larva.

Functionally, calcium-binding protein involved in larval development and metamorphosis. Likely to function as calcium buffers mediating the transport of calcium from the sea water to the blastocoel where calcium is required for skeleton formation. This chain is Calcium-binding protein SPEC 2D (SPEC2D), found in Strongylocentrotus purpuratus (Purple sea urchin).